We begin with the raw amino-acid sequence, 80 residues long: Exodeoxyribonuclease 7 small subunit (80 aa).

The protein belongs to the XseB family. In terms of assembly, heterooligomer composed of large and small subunits.

The protein localises to the cytoplasm. It carries out the reaction Exonucleolytic cleavage in either 5'- to 3'- or 3'- to 5'-direction to yield nucleoside 5'-phosphates.. Functionally, bidirectionally degrades single-stranded DNA into large acid-insoluble oligonucleotides, which are then degraded further into small acid-soluble oligonucleotides. This chain is Exodeoxyribonuclease 7 small subunit, found in Vibrio cholerae serotype O1 (strain ATCC 39541 / Classical Ogawa 395 / O395).